We begin with the raw amino-acid sequence, 130 residues long: Small ribosomal subunit protein uS8 (130 aa).

Belongs to the universal ribosomal protein uS8 family. In terms of assembly, part of the 30S ribosomal subunit. Contacts proteins S5 and S12.

Its function is as follows. One of the primary rRNA binding proteins, it binds directly to 16S rRNA central domain where it helps coordinate assembly of the platform of the 30S subunit. This Phytoplasma mali (strain AT) protein is Small ribosomal subunit protein uS8.